An 88-amino-acid polypeptide reads, in one-letter code: Small ribosomal subunit protein uS17 (88 aa).

This sequence belongs to the universal ribosomal protein uS17 family. As to quaternary structure, part of the 30S ribosomal subunit.

One of the primary rRNA binding proteins, it binds specifically to the 5'-end of 16S ribosomal RNA. The chain is Small ribosomal subunit protein uS17 from Lawsonia intracellularis (strain PHE/MN1-00).